The following is a 152-amino-acid chain: Transcriptional regulator MraZ (152 aa).

2 SpoVT-AbrB domains span residues 5 to 52 and 81 to 124; these read ANAI…PLNE and ATES…DEDM.

It belongs to the MraZ family. As to quaternary structure, forms oligomers.

It is found in the cytoplasm. Its subcellular location is the nucleoid. This is Transcriptional regulator MraZ from Psychromonas ingrahamii (strain DSM 17664 / CCUG 51855 / 37).